The sequence spans 1142 residues: Nucleoporin nup131 (1142 aa).

Belongs to the nucleoporin Nup133 family. As to quaternary structure, component of the npc107-120 complex which consists of nup85, nup107, nup120, nup131, nup132 and seh1. Interacts with nup107.

The protein resides in the nucleus. Functionally, functions as a component of the nuclear pore complex (NPC). NPC components, collectively referred to as nucleoporins (NUPs), can play the role of both NPC structural components and of docking or interaction partners for transiently associated nuclear transport factors. Active directional transport is assured by both, a Phe-Gly (FG) repeat affinity gradient for these transport factors across the NPC and a transport cofactor concentration gradient across the nuclear envelope. The sequence is that of Nucleoporin nup131 (nup131) from Schizosaccharomyces pombe (strain 972 / ATCC 24843) (Fission yeast).